A 613-amino-acid chain; its full sequence is Oxidoreductase GME11365 (613 aa).

Plastocyanin-like domains are found at residues 72–188, 198–331, and 431–571; these read ISEA…HGPS, PLLI…WIHG, and VDWR…EQPS.

Belongs to the multicopper oxidase family.

Its pathway is secondary metabolite biosynthesis. Functionally, oxidoreductase; part of the gene cluster that mediates the biosynthesis of dibenzodioxocinones such as pestalotiollide B, a novel class of inhibitors against cholesterol ester transfer protein (CEPT). The biosynthesis initiates from condensation of acetate and malonate units catalyzed by the non-reducing PKS pks8/GME11356. Pks8/GME11356 lacks a thioesterase (TE) domain, which is important to the cyclizing of the third ring of atrochrysone carboxylic acid, and the esterase GME11355 might play the role of TE and catalyzes the cyclization reaction of the C ring. The lactamase-like protein GME11357 (or other beta-lactamases in Pestalotiopsis microspora) probably hydrolyzes the thioester bond between the ACP of pks8/GME11356 and the intermediate to release atrochrysone carboxylic acid, which is spontaneously dehydrates to form endocrocin anthrone. Endocrocin anthrone is further converted to emodin via the endocrocin intermediate. Emodin is then oxidized by several enzymes such as the Baeyer-Villiger oxidase GME11358, the oxidoreductase GME11367, the short chain dehydrogenase/reductase GME11373, as well as by other oxidoreductases from the cluster, to modify the A and C rings and open the B ring, and finally yield monodictyphenone. The prenyltransferase GME11375 may catalyze the addition reaction between the C5 side chains and the carbon bone of dibenzodioxocinones. The remaining biochemical reactions to the final product dibenzodioxocinones should be methylation catalyzed by methyltransferase GME11366 and reduction and lactonization reaction catalyzed by a series of oxidordeuctases. The sequence is that of Oxidoreductase GME11365 from Pestalotiopsis microspora.